The chain runs to 266 residues: Apolipoprotein A-I (266 aa).

Residues 1-18 (MKAVVLTLAVLFLTGSQA) form the signal peptide. Tandem repeats lie at residues 67–88 (LKLL…EQIG) and 89–110 (PVTQ…QEMN). A 10 X approximate tandem repeats region spans residues 67 to 266 (LKLLDNWDTL…DEATKKLNAQ (200 aa)). Met-109 is subject to Methionine sulfoxide. Residues 111–121 (KDLEEVKKKVQ) form a 3; half-length repeat. Repeat copies occupy residues 122–143 (PYLD…QKVA), 144–165 (PLGA…EKLS), 166–187 (PLGE…AQLA), 188–209 (PYSD…EGGG), and 210–231 (AALA…EKAK). Residues 232–242 (PALEDLRQGLL) form a 9; half-length repeat. The stretch at 243 to 266 (PVLESFRTSLLAAVDEATKKLNAQ) is repeat 10.

This sequence belongs to the apolipoprotein A1/A4/E family. In terms of assembly, homodimer. Interacts with APOA1BP and CLU. Component of a sperm activating protein complex (SPAP), consisting of APOA1, an immunoglobulin heavy chain, an immunoglobulin light chain and albumin. Interacts with NDRG1. Interacts with SCGB3A2. Interacts with NAXE and YJEFN3. Glycosylated. In terms of processing, palmitoylated. Post-translationally, phosphorylation sites are present in the extracellular medium.

It is found in the secreted. Its function is as follows. Participates in the reverse transport of cholesterol from tissues to the liver for excretion by promoting cholesterol efflux from tissues and by acting as a cofactor for the lecithin cholesterol acyltransferase (LCAT). As part of the SPAP complex, activates spermatozoa motility. The polypeptide is Apolipoprotein A-I (APOA1) (Odobenus rosmarus divergens (Pacific walrus)).